Reading from the N-terminus, the 475-residue chain is Lactate utilization protein B (475 aa).

4Fe-4S ferredoxin-type domains follow at residues 304 to 334 (GTEF…GHSY) and 353 to 382 (YDDY…LHEL). [4Fe-4S] cluster-binding residues include Cys313, Cys316, Cys319, Cys323, Cys366, Cys369, and Cys373.

It belongs to the LutB/YkgF family.

Functionally, is involved in L-lactate degradation and allows cells to grow with lactate as the sole carbon source. Has probably a role as an electron transporter during oxidation of L-lactate. The chain is Lactate utilization protein B from Geobacillus sp. (strain WCH70).